The chain runs to 375 residues: All-trans-retinol dehydrogenase [NAD(+)] ADH1B (375 aa).

Ser-2 is modified (N-acetylserine). Residue Ser-23 is modified to Phosphoserine. Tyr-35 is modified (phosphotyrosine). Positions 47, 68, 98, 101, 104, 112, and 175 each coordinate Zn(2+). NAD(+)-binding positions include 200–205, Asp-224, Lys-229, 293–295, and Arg-370; these read GLGGVG and VGV.

The protein belongs to the zinc-containing alcohol dehydrogenase family. As to quaternary structure, homodimer or heterodimer of closely related subunits. The cofactor is Zn(2+). Expressed in liver.

It localises to the cytoplasm. The enzyme catalyses all-trans-retinol + NAD(+) = all-trans-retinal + NADH + H(+). It catalyses the reaction all-trans-4-hydroxyretinol + NAD(+) = all-trans-4-hydroxyretinal + NADH + H(+). It carries out the reaction all-trans-4-oxoretinol + NAD(+) = all-trans-4-oxoretinal + NADH + H(+). Catalyzes the NAD-dependent oxidation of all-trans-retinol and its derivatives such as all-trans-4-hydroxyretinol and may participate in retinoid metabolism. In vitro can also catalyze the NADH-dependent reduction of all-trans-retinal and its derivatives such as all-trans-4-oxoretinal. Catalyzes in the oxidative direction with higher efficiency. Has the same affinity for all-trans-4-hydroxyretinol and all-trans-4-oxoretinal. This chain is All-trans-retinol dehydrogenase [NAD(+)] ADH1B, found in Papio hamadryas (Hamadryas baboon).